The primary structure comprises 473 residues: Sulfate adenylyltransferase subunit 1 (473 aa).

The region spanning 19 to 238 is the tr-type G domain; sequence KTLLKFLTCG…IKIKNSISSE (220 aa). Residues 28–35 form a G1 region; sequence GSVDDGKS. 28–35 contributes to the GTP binding site; that stretch reads GSVDDGKS. Positions 86 to 90 are G2; that stretch reads GITID. The G3 stretch occupies residues 107 to 110; that stretch reads DTPG. GTP is bound by residues 107–111 and 162–165; these read DTPGH and NKMD. A G4 region spans residues 162–165; the sequence is NKMD. The segment at 200–202 is G5; sequence SAL.

This sequence belongs to the TRAFAC class translation factor GTPase superfamily. Classic translation factor GTPase family. CysN/NodQ subfamily. In terms of assembly, heterodimer composed of CysD, the smaller subunit, and CysN.

The catalysed reaction is sulfate + ATP + H(+) = adenosine 5'-phosphosulfate + diphosphate. It participates in sulfur metabolism; hydrogen sulfide biosynthesis; sulfite from sulfate: step 1/3. With CysD forms the ATP sulfurylase (ATPS) that catalyzes the adenylation of sulfate producing adenosine 5'-phosphosulfate (APS) and diphosphate, the first enzymatic step in sulfur assimilation pathway. APS synthesis involves the formation of a high-energy phosphoric-sulfuric acid anhydride bond driven by GTP hydrolysis by CysN coupled to ATP hydrolysis by CysD. The chain is Sulfate adenylyltransferase subunit 1 from Buchnera aphidicola subsp. Acyrthosiphon pisum (strain 5A).